The primary structure comprises 458 residues: UDP-N-acetylmuramate--L-alanine ligase (458 aa).

ATP is bound at residue 112–118 (GMHGKTT).

It belongs to the MurCDEF family.

It localises to the cytoplasm. The catalysed reaction is UDP-N-acetyl-alpha-D-muramate + L-alanine + ATP = UDP-N-acetyl-alpha-D-muramoyl-L-alanine + ADP + phosphate + H(+). It participates in cell wall biogenesis; peptidoglycan biosynthesis. Functionally, cell wall formation. The polypeptide is UDP-N-acetylmuramate--L-alanine ligase (Acidobacterium capsulatum (strain ATCC 51196 / DSM 11244 / BCRC 80197 / JCM 7670 / NBRC 15755 / NCIMB 13165 / 161)).